The sequence spans 1311 residues: Clustered mitochondria protein homolog (1311 aa).

The span at 1–18 (MAEKTNGAAAPNGAADAP) shows a compositional bias: low complexity. The disordered stretch occupies residues 1–27 (MAEKTNGAAAPNGAADAPKSSPEQAQD). In terms of domain architecture, Clu spans 324-568 (DITRTQESFL…RITPLDVSWQ (245 aa)). A TPR 1 repeat occupies 491-525 (IDYGAVDGKDLVATDERFVPQFQKLSKALKVKPHA). The segment covering 606 to 630 (SEVAKRGQAKKDQAAVEEKKEAKAE) has biased composition (basic and acidic residues). Disordered stretches follow at residues 606-694 (SEVA…SSDR) and 925-966 (PAPV…SSTI). Residues 631–661 (SEEDSDSSSEEESSSDESDSEESSSDEDEEE) are compositionally biased toward acidic residues. Residues 665–675 (PKKKSVPKKAA) are compositionally biased toward basic residues. Positions 676–694 (KKEEVKEEKKDEKEASSDR) are enriched in basic and acidic residues. TPR repeat units follow at residues 1034–1067 (ARVY…AERT), 1076–1109 (LLDY…WKII), and 1118–1151 (ITTI…CEVV). A compositionally biased stretch (basic and acidic residues) spans 1276 to 1286 (LKFIEGTDKQK). The disordered stretch occupies residues 1276-1311 (LKFIEGTDKQKKPAAKKRTGRANPKRRGAEPVSTKA). Residues 1287 to 1301 (KPAAKKRTGRANPKR) show a composition bias toward basic residues.

It belongs to the CLU family. As to quaternary structure, may associate with the eukaryotic translation initiation factor 3 (eIF-3) complex.

It localises to the cytoplasm. MRNA-binding protein involved in proper cytoplasmic distribution of mitochondria. In Pyricularia oryzae (strain 70-15 / ATCC MYA-4617 / FGSC 8958) (Rice blast fungus), this protein is Clustered mitochondria protein homolog.